A 554-amino-acid polypeptide reads, in one-letter code: MTPLIFVTGGVVSSLGKGIAAASLASILEARGLKVTMMKLDPYINVDPGTMSPFQHGEVYVTDDGAETDLDLGHYERYVRTRLSRKNSVTTGRIYENVIRKERRGDYLGATVQVIPHITDEIRRCIDEATAGFDVALIEIGGTVGDIESLPFLEAIRQVRTERGAEKAMFMHLTLVPYIAAAGELKTKPTQHSVKELRSIGIQPDVLLCRSEQAVPDSERRKIALFTNVSERAVISCPDIDVLYGMPLELLRQGLDELVIEQFKLRDKVAAADLSEWAAVVDAVKHPLDEVNIAVVGKYVDHQDAYKSVAEALRHGGLRQRTKVNLKWLEAQDLEGSDMSALQDIDGILVPGGFGDRGFEGKVQTSKFAREHKVPYFGICYGMQAAVVDYARHVADLDAANSTENDRQSPHPVIGLITEWRTATGEVEKRDEKSDLGGTMRLGLQEQRLKPGTLAREVYGKDVVAERHRHRYEFNNRYRTQLEDAGLVISGKSMDDTLVEVVELPRDMHPWFLACQAHPEFLSTPRDGHPLFIGFVRAAREKKAGGKLLKEARA.

Positions 1 to 265 are amidoligase domain; that stretch reads MTPLIFVTGG…DELVIEQFKL (265 aa). Ser13 serves as a coordination point for CTP. Ser13 contributes to the UTP binding site. ATP is bound by residues 14–19 and Asp71; that span reads SLGKGI. Mg(2+) is bound by residues Asp71 and Glu139. CTP-binding positions include 146–148, 186–191, and Lys222; these read DIE and KTKPTQ. UTP contacts are provided by residues 186-191 and Lys222; that span reads KTKPTQ. The 254-residue stretch at 292–545 folds into the Glutamine amidotransferase type-1 domain; it reads NIAVVGKYVD…VRAAREKKAG (254 aa). Residue Gly353 coordinates L-glutamine. Cys380 acts as the Nucleophile; for glutamine hydrolysis in catalysis. L-glutamine contacts are provided by residues 381–384, Glu404, and Arg471; that span reads YGMQ. Active-site residues include His518 and Glu520.

It belongs to the CTP synthase family. As to quaternary structure, homotetramer.

The enzyme catalyses UTP + L-glutamine + ATP + H2O = CTP + L-glutamate + ADP + phosphate + 2 H(+). It carries out the reaction L-glutamine + H2O = L-glutamate + NH4(+). The catalysed reaction is UTP + NH4(+) + ATP = CTP + ADP + phosphate + 2 H(+). It participates in pyrimidine metabolism; CTP biosynthesis via de novo pathway; CTP from UDP: step 2/2. With respect to regulation, allosterically activated by GTP, when glutamine is the substrate; GTP has no effect on the reaction when ammonia is the substrate. The allosteric effector GTP functions by stabilizing the protein conformation that binds the tetrahedral intermediate(s) formed during glutamine hydrolysis. Inhibited by the product CTP, via allosteric rather than competitive inhibition. In terms of biological role, catalyzes the ATP-dependent amination of UTP to CTP with either L-glutamine or ammonia as the source of nitrogen. Regulates intracellular CTP levels through interactions with the four ribonucleotide triphosphates. This is CTP synthase from Xanthomonas euvesicatoria pv. vesicatoria (strain 85-10) (Xanthomonas campestris pv. vesicatoria).